We begin with the raw amino-acid sequence, 79 residues long: Dolichol phosphate-mannose biosynthesis regulatory protein (79 aa).

Helical transmembrane passes span 8–28 (IGFVMVLFRIFVFGYYTTWVI) and 50–70 (IIIPLVLLVVGITAIGTFLGL).

This sequence belongs to the DPM2 family. Component of the dolichol-phosphate mannose (DPM) synthase complex composed of dpm1, dpm2 and dpm3.

The protein localises to the endoplasmic reticulum membrane. It functions in the pathway protein modification; protein glycosylation. In terms of biological role, regulates the biosynthesis of dolichol phosphate-mannose. Regulatory subunit of the dolichol-phosphate mannose (DPM) synthase complex; essential for the ER localization and stable expression of dpm1. The chain is Dolichol phosphate-mannose biosynthesis regulatory protein (dpm2-1) from Dictyostelium discoideum (Social amoeba).